We begin with the raw amino-acid sequence, 938 residues long: Nitrate reductase (938 aa).

The 64-residue stretch at 1–64 (MSVVQSSCAY…RLLDSLAQPN (64 aa)) folds into the 4Fe-4S Mo/W bis-MGD-type domain. Residues C8, C11, C15, and C50 each contribute to the [4Fe-4S] cluster site.

Belongs to the prokaryotic molybdopterin-containing oxidoreductase family. NasA/NapA/NarB subfamily. Requires [4Fe-4S] cluster as cofactor. Mo-bis(molybdopterin guanine dinucleotide) is required as a cofactor.

It localises to the cytoplasm. The enzyme catalyses nitrate + a quinol = a quinone + nitrite + H2O. It participates in nitrogen metabolism; nitrate reduction (assimilation). In terms of biological role, nitrate reductase is a key enzyme involved in the first step of nitrate assimilation in plants, fungi and bacteria. This Shewanella frigidimarina (strain NCIMB 400) protein is Nitrate reductase.